The chain runs to 603 residues: Prostaglandin G/H synthase 2 (603 aa).

Residues 1 to 17 (MLLPCALLAALLAAGHA) form the signal peptide. The EGF-like domain maps to 18–55 (ANPCCSLPCQNRGVCMTTGFDRYECDCTRTGYYGENCT). 4 disulfide bridges follow: cysteine 21–cysteine 32, cysteine 22–cysteine 145, cysteine 26–cysteine 42, and cysteine 44–cysteine 54. 2 N-linked (GlcNAc...) asparagine glycosylation sites follow: asparagine 53 and asparagine 90. Arginine 106 serves as a coordination point for substrate. Residue asparagine 130 is glycosylated (N-linked (GlcNAc...) asparagine). Histidine 193 functions as the Proton acceptor in the catalytic mechanism. Tyrosine 341 contributes to the substrate binding site. Tyrosine 371 acts as the For cyclooxygenase activity in catalysis. Histidine 374 is a binding site for heme b. A disulfide bridge connects residues cysteine 555 and cysteine 561.

Belongs to the prostaglandin G/H synthase family. Homodimer. Heme b is required as a cofactor.

It is found in the microsome membrane. Its subcellular location is the endoplasmic reticulum membrane. It carries out the reaction (5Z,8Z,11Z,14Z)-eicosatetraenoate + AH2 + 2 O2 = prostaglandin H2 + A + H2O. The enzyme catalyses (9Z,12Z)-octadecadienoate + AH2 + O2 = (9R)-hydroxy-(10E,12Z)-octadecadienoate + A + H2O. It catalyses the reaction (9Z,12Z)-octadecadienoate + AH2 + O2 = (9S)-hydroxy-(10E,12Z)-octadecadienoate + A + H2O. The catalysed reaction is (9Z,12Z)-octadecadienoate + AH2 + O2 = (13S)-hydroxy-(9Z,11E)-octadecadienoate + A + H2O. It carries out the reaction (9Z,12Z)-octadecadienoate + AH2 + O2 = (13R)-hydroxy-(9Z,11E)-octadecadienoate + A + H2O. It participates in lipid metabolism; prostaglandin biosynthesis. In terms of biological role, dual cyclooxygenase and peroxidase in the biosynthesis pathway of prostanoids, a class of C20 oxylipins mainly derived from arachidonate ((5Z,8Z,11Z,14Z)-eicosatetraenoate, AA, C20:4(n-6)), with a particular role in the inflammatory response. The cyclooxygenase activity oxygenates AA to the hydroperoxy endoperoxide prostaglandin G2 (PGG2), and the peroxidase activity reduces PGG2 to the hydroxy endoperoxide prostaglandin H2 (PGH2), the precursor of all 2-series prostaglandins and thromboxanes. This complex transformation is initiated by abstraction of hydrogen at carbon 13 (with S-stereochemistry), followed by insertion of molecular O2 to form the endoperoxide bridge between carbon 9 and 11 that defines prostaglandins. The insertion of a second molecule of O2 (bis-oxygenase activity) yields a hydroperoxy group in PGG2 that is then reduced to PGH2 by two electrons. Similarly catalyzes successive cyclooxygenation and peroxidation of dihomo-gamma-linoleate (DGLA, C20:3(n-6)) and eicosapentaenoate (EPA, C20:5(n-3)) to corresponding PGH1 and PGH3, the precursors of 1- and 3-series prostaglandins. In an alternative pathway of prostanoid biosynthesis, converts 2-arachidonoyl lysophopholipids to prostanoid lysophopholipids, which are then hydrolyzed by intracellular phospholipases to release free prostanoids. Metabolizes 2-arachidonoyl glycerol yielding the glyceryl ester of PGH2, a process that can contribute to pain response. Generates lipid mediators from n-3 and n-6 polyunsaturated fatty acids (PUFAs) via a lipoxygenase-type mechanism. Oxygenates PUFAs to hydroperoxy compounds and then reduces them to corresponding alcohols. Plays a role in the generation of resolution phase interaction products (resolvins) during both sterile and infectious inflammation. Metabolizes docosahexaenoate (DHA, C22:6(n-3)) to 17R-HDHA, a precursor of the D-series resolvins (RvDs). As a component of the biosynthetic pathway of E-series resolvins (RvEs), converts eicosapentaenoate (EPA, C20:5(n-3)) primarily to 18S-HEPE that is further metabolized by ALOX5 and LTA4H to generate 18S-RvE1 and 18S-RvE2. In vascular endothelial cells, converts docosapentaenoate (DPA, C22:5(n-3)) to 13R-HDPA, a precursor for 13-series resolvins (RvTs) shown to activate macrophage phagocytosis during bacterial infection. In activated leukocytes, contributes to oxygenation of hydroxyeicosatetraenoates (HETE) to diHETES (5,15-diHETE and 5,11-diHETE). Can also use linoleate (LA, (9Z,12Z)-octadecadienoate, C18:2(n-6)) as substrate and produce hydroxyoctadecadienoates (HODEs) in a regio- and stereospecific manner, being (9R)-HODE ((9R)-hydroxy-(10E,12Z)-octadecadienoate) and (13S)-HODE ((13S)-hydroxy-(9Z,11E)-octadecadienoate) its major products. During neuroinflammation, plays a role in neuronal secretion of specialized preresolving mediators (SPMs) 15R-lipoxin A4 that regulates phagocytic microglia. This chain is Prostaglandin G/H synthase 2 (PTGS2), found in Gallus gallus (Chicken).